A 194-amino-acid chain; its full sequence is Holliday junction branch migration complex subunit RuvA (194 aa).

The interval 1–64 is domain I; that stretch reads MISRLTGKLV…EDAHLLFGFA (64 aa). The domain II stretch occupies residues 65–143; sequence TAEERKTFRQ…AHTVTDGLFA (79 aa). A flexible linker region spans residues 144–147; that stretch reads ASPA. The domain III stretch occupies residues 147-194; that stretch reads AADETEDIVSTLLALGYNEREAKAAVKGVPKGTDVGEGVRLALKNLLK.

This sequence belongs to the RuvA family. As to quaternary structure, homotetramer. Forms an RuvA(8)-RuvB(12)-Holliday junction (HJ) complex. HJ DNA is sandwiched between 2 RuvA tetramers; dsDNA enters through RuvA and exits via RuvB. An RuvB hexamer assembles on each DNA strand where it exits the tetramer. Each RuvB hexamer is contacted by two RuvA subunits (via domain III) on 2 adjacent RuvB subunits; this complex drives branch migration. In the full resolvosome a probable DNA-RuvA(4)-RuvB(12)-RuvC(2) complex forms which resolves the HJ.

Its subcellular location is the cytoplasm. In terms of biological role, the RuvA-RuvB-RuvC complex processes Holliday junction (HJ) DNA during genetic recombination and DNA repair, while the RuvA-RuvB complex plays an important role in the rescue of blocked DNA replication forks via replication fork reversal (RFR). RuvA specifically binds to HJ cruciform DNA, conferring on it an open structure. The RuvB hexamer acts as an ATP-dependent pump, pulling dsDNA into and through the RuvAB complex. HJ branch migration allows RuvC to scan DNA until it finds its consensus sequence, where it cleaves and resolves the cruciform DNA. In Neisseria gonorrhoeae (strain ATCC 700825 / FA 1090), this protein is Holliday junction branch migration complex subunit RuvA.